Consider the following 754-residue polypeptide: 5-methyltetrahydropteroyltriglutamate--homocysteine methyltransferase (754 aa).

Residues 17–20 (RELK) and Lys117 each bind 5-methyltetrahydropteroyltri-L-glutamate. L-homocysteine is bound by residues 431-433 (IGS) and Glu484. L-methionine-binding positions include 431–433 (IGS) and Glu484. Residues 515-516 (RC) and Trp561 each bind 5-methyltetrahydropteroyltri-L-glutamate. An L-homocysteine-binding site is contributed by Asp599. Asp599 serves as a coordination point for L-methionine. Position 605 (Glu605) interacts with 5-methyltetrahydropteroyltri-L-glutamate. Positions 641, 643, and 665 each coordinate Zn(2+). His694 (proton donor) is an active-site residue. Cys726 is a binding site for Zn(2+).

This sequence belongs to the vitamin-B12 independent methionine synthase family. Requires Zn(2+) as cofactor.

It carries out the reaction 5-methyltetrahydropteroyltri-L-glutamate + L-homocysteine = tetrahydropteroyltri-L-glutamate + L-methionine. It functions in the pathway amino-acid biosynthesis; L-methionine biosynthesis via de novo pathway; L-methionine from L-homocysteine (MetE route): step 1/1. Its function is as follows. Catalyzes the transfer of a methyl group from 5-methyltetrahydrofolate to homocysteine resulting in methionine formation. The polypeptide is 5-methyltetrahydropteroyltriglutamate--homocysteine methyltransferase (Salmonella dublin (strain CT_02021853)).